Consider the following 74-residue polypeptide: EMBRYO SURROUNDING FACTOR 1-like protein 4 (74 aa).

The N-terminal stretch at 1–22 (MKSSHAYLVCILLLSLFSLHQC) is a signal peptide. 4 cysteine pairs are disulfide-bonded: C36/C51, C41/C70, C49/C66, and C52/C59.

Belongs to the MEG family. As to expression, expressed in flowers.

The sequence is that of EMBRYO SURROUNDING FACTOR 1-like protein 4 (ESFL4) from Arabidopsis thaliana (Mouse-ear cress).